A 437-amino-acid polypeptide reads, in one-letter code: tRNA(Ile2) 2-agmatinylcytidine synthetase TiaS (437 aa).

The protein belongs to the TiaS family.

Its subcellular location is the cytoplasm. It catalyses the reaction cytidine(34) in tRNA(Ile2) + agmatine + ATP + H2O = 2-agmatinylcytidine(34) in tRNA(Ile2) + AMP + 2 phosphate + 2 H(+). ATP-dependent agmatine transferase that catalyzes the formation of 2-agmatinylcytidine (agm2C) at the wobble position (C34) of tRNA(Ile2), converting the codon specificity from AUG to AUA. This is tRNA(Ile2) 2-agmatinylcytidine synthetase TiaS from Acidilobus saccharovorans (strain DSM 16705 / JCM 18335 / VKM B-2471 / 345-15).